The sequence spans 227 residues: Fibrillarin-like rRNA/tRNA 2'-O-methyltransferase (227 aa).

S-adenosyl-L-methionine-binding positions include 82–83, 100–101, 125–126, and 145–148; these read TT, EF, DA, and DVAQ.

It belongs to the methyltransferase superfamily. Fibrillarin family. As to quaternary structure, interacts with nop5. Component of box C/D small ribonucleoprotein (sRNP) particles that contain rpl7ae, FlpA and nop5, plus a guide RNA.

In terms of biological role, involved in pre-rRNA and tRNA processing. Utilizes the methyl donor S-adenosyl-L-methionine to catalyze the site-specific 2'-hydroxyl methylation of ribose moieties in rRNA and tRNA. Site specificity is provided by a guide RNA that base pairs with the substrate. Methylation occurs at a characteristic distance from the sequence involved in base pairing with the guide RNA. In Methanosarcina acetivorans (strain ATCC 35395 / DSM 2834 / JCM 12185 / C2A), this protein is Fibrillarin-like rRNA/tRNA 2'-O-methyltransferase.